The primary structure comprises 362 residues: MEKITVTLGERSYPITIAAGLFNDPASFKPLKAGDQVMLVTNQTLAPLYLDSLRAVLEHGGIKVDQVILPDGEQYKSLSVMEQVFSALLEKPHGRDTTLVALGGGVVGDLTGFAAACYQRGVRFIQVPTTLLSQVDSSVGGKTAVNHPLGKNMIGAFYQPASVVVDLNCLKTLPPRELASGLAEVIKYGIILDAAFFDWLENNIDALLALDMSALAYCIRRCCELKADVVAADEREESGARALLNLGHTYGHAIEAEMGYGVWLHGEAVAAGMVMAAQTSRRLGQLSVSDVERIKKLLLRAGLPVCGPKEMAPESYLPHMMRDKKVLAGELRLVLPTAIGKSEIRGGVAHDMVLASIADCRP.

NAD(+) is bound by residues 71 to 76 (DGEQYK), 105 to 109 (GVVGD), 129 to 130 (TT), K142, K151, and 169 to 172 (CLKT). The Zn(2+) site is built by E184, H248, and H265.

This sequence belongs to the sugar phosphate cyclases superfamily. Dehydroquinate synthase family. The cofactor is Co(2+). Zn(2+) is required as a cofactor. It depends on NAD(+) as a cofactor.

The protein resides in the cytoplasm. The catalysed reaction is 7-phospho-2-dehydro-3-deoxy-D-arabino-heptonate = 3-dehydroquinate + phosphate. Its pathway is metabolic intermediate biosynthesis; chorismate biosynthesis; chorismate from D-erythrose 4-phosphate and phosphoenolpyruvate: step 2/7. Its function is as follows. Catalyzes the conversion of 3-deoxy-D-arabino-heptulosonate 7-phosphate (DAHP) to dehydroquinate (DHQ). The polypeptide is 3-dehydroquinate synthase (Yersinia pseudotuberculosis serotype O:1b (strain IP 31758)).